Here is a 380-residue protein sequence, read N- to C-terminus: MKKKSVWIKADEGGWEQQKERITTGLESGADCVLVNPGDVGKVRELGNIPVATFGRDNKSGAEIIVVGKRGEGDGTKPLPLETQGSLDINAATLLRDKEVAVGGYVIIKDKRYEQFAAEMGKVCDFLIVTGTDWKVIPLENLIAELQRYDVKIIFGVKNAEEARLAFKTLETGADGVLLNSGNIQEIKDTIQAAREMENERTELESAVITRVEPLGMGDRVCVDTCNLMQKGEGMLIGSQASGMFLVNSESDDSPYVAARPFRVNAGAVHSYIKIGDKTRYLSELRTGDAVTIIDSKGRQREGFVGRVKIESRPLMLIEAKAGNRTLSAILQNAETIKLVGKDGNPISVAKLKKGDEVLVRLEEGARHFGKKIEETIIEK.

This sequence belongs to the archaeal-type DHQ synthase family.

The catalysed reaction is 2-amino-2,3,7-trideoxy-D-lyxo-hept-6-ulosonate + NAD(+) + H2O = 3-dehydroquinate + NH4(+) + NADH + H(+). Catalyzes the oxidative deamination and cyclization of 2-amino-3,7-dideoxy-D-threo-hept-6-ulosonic acid (ADH) to yield 3-dehydroquinate (DHQ), which is fed into the canonical shikimic pathway of aromatic amino acid biosynthesis. This is 3-dehydroquinate synthase from Methanosarcina barkeri (strain Fusaro / DSM 804).